The primary structure comprises 211 residues: Thymidylate kinase (211 aa).

Gly-7–Thr-14 is a binding site for ATP.

It belongs to the thymidylate kinase family.

The enzyme catalyses dTMP + ATP = dTDP + ADP. Its function is as follows. Phosphorylation of dTMP to form dTDP in both de novo and salvage pathways of dTTP synthesis. The sequence is that of Thymidylate kinase from Anaplasma marginale (strain St. Maries).